The chain runs to 402 residues: Propionate kinase (402 aa).

Positions 11 and 18 each coordinate ATP. Mg(2+) is bound at residue Asn11. Arg86 contacts substrate. Asp143 functions as the Proton donor/acceptor in the catalytic mechanism. ATP contacts are provided by residues His175, 203–207 (HLGNG), 278–280 (DLR), and 326–330 (GIGEN).

This sequence belongs to the acetokinase family. TdcD subfamily. Homodimer. Mg(2+) is required as a cofactor.

It carries out the reaction propanoate + ATP = propanoyl phosphate + ADP. Its pathway is amino-acid degradation; L-threonine degradation via propanoate pathway; propanoate from L-threonine: step 4/4. In terms of biological role, catalyzes the conversion of propionyl phosphate and ADP to propionate and ATP. This Citrobacter koseri (strain ATCC BAA-895 / CDC 4225-83 / SGSC4696) protein is Propionate kinase.